The sequence spans 445 residues: Phosphoglucosamine mutase (445 aa).

Ser99 serves as the catalytic Phosphoserine intermediate. The Mg(2+) site is built by Ser99, Asp242, Asp244, and Asp246. The residue at position 99 (Ser99) is a Phosphoserine.

The protein belongs to the phosphohexose mutase family. Requires Mg(2+) as cofactor. Activated by phosphorylation.

The catalysed reaction is alpha-D-glucosamine 1-phosphate = D-glucosamine 6-phosphate. Its function is as follows. Catalyzes the conversion of glucosamine-6-phosphate to glucosamine-1-phosphate. The polypeptide is Phosphoglucosamine mutase (Campylobacter lari (strain RM2100 / D67 / ATCC BAA-1060)).